The sequence spans 106 residues: Large ribosomal subunit protein uL24 (106 aa).

This sequence belongs to the universal ribosomal protein uL24 family. Part of the 50S ribosomal subunit.

In terms of biological role, one of two assembly initiator proteins, it binds directly to the 5'-end of the 23S rRNA, where it nucleates assembly of the 50S subunit. Its function is as follows. One of the proteins that surrounds the polypeptide exit tunnel on the outside of the subunit. The sequence is that of Large ribosomal subunit protein uL24 from Orientia tsutsugamushi (strain Boryong) (Rickettsia tsutsugamushi).